A 264-amino-acid chain; its full sequence is tRNA pseudouridine synthase A (264 aa).

The active-site Nucleophile is Asp-52. Residue Tyr-110 participates in substrate binding.

It belongs to the tRNA pseudouridine synthase TruA family. As to quaternary structure, homodimer.

The enzyme catalyses uridine(38/39/40) in tRNA = pseudouridine(38/39/40) in tRNA. In terms of biological role, formation of pseudouridine at positions 38, 39 and 40 in the anticodon stem and loop of transfer RNAs. The protein is tRNA pseudouridine synthase A of Wigglesworthia glossinidia brevipalpis.